We begin with the raw amino-acid sequence, 95 residues long: uncharacterized protein (95 aa).

Residues 29–53 form a helical membrane-spanning segment; the sequence is LVSTATCMAALFLRFKLIAWVAFIL.

The protein localises to the membrane. This is an uncharacterized protein from Schizosaccharomyces pombe (strain 972 / ATCC 24843) (Fission yeast).